The primary structure comprises 118 residues: Class II hydrophobin CRP (118 aa).

The N-terminal stretch at 1-22 (MQFSIIAISFLASLAMASPAKR) is a signal peptide. The interval 20–46 (AKRGGGGGGSGSGSGSGSGSGSGGGST) is disordered. The span at 22–45 (RGGGGGGSGSGSGSGSGSGSGGGS) shows a compositional bias: gly residues. A run of 7 repeats spans residues 29–30 (SG), 31–32 (SG), 33–34 (SG), 35–36 (SG), 37–38 (SG), 39–40 (SG), and 41–42 (SG). Residues 29–42 (SGSGSGSGSGSGSG) are 7 X 2 AA tandem repeats of S-G. Intrachain disulfides connect Cys51–Cys100, Cys61–Cys91, Cys62–Cys74, and Cys101–Cys112.

Belongs to the cerato-ulmin hydrophobin family. In terms of assembly, homotetramer. Further self-assembles to form highly ordered films at water-air interfaces through intermolecular interactions.

Its subcellular location is the secreted. The protein resides in the cell wall. Functionally, aerial growth, conidiation, and dispersal of filamentous fungi in the environment rely upon a capability of their secreting small amphipathic proteins called hydrophobins (HPBs) with low sequence identity. Class I can self-assemble into an outermost layer of rodlet bundles on aerial cell surfaces, conferring cellular hydrophobicity that supports fungal growth, development and dispersal; whereas Class II form highly ordered films at water-air interfaces through intermolecular interactions but contribute nothing to the rodlet structure. Cryparin is a class II hydrophobin that is the most abundant protein produced by this fungus when grown in liquid culture and that plays an essential role in the fitness of this important plant pathogen by facilitating the eruption of the fungal fruiting bodies through the bark of its host tree. This is Class II hydrophobin CRP from Cryphonectria parasitica (Chestnut blight fungus).